The sequence spans 152 residues: Ribosome maturation factor RimP (152 aa).

This sequence belongs to the RimP family.

The protein localises to the cytoplasm. Its function is as follows. Required for maturation of 30S ribosomal subunits. The polypeptide is Ribosome maturation factor RimP (Francisella tularensis subsp. tularensis (strain FSC 198)).